The chain runs to 322 residues: Thiamine thiazole synthase (322 aa).

Residues Cys84, 105-106 (EA), Gly113, and Val178 each bind substrate. A 2,3-didehydroalanine (Cys) modification is found at Cys211. Substrate-binding positions include Asp213, His228, Met280, and 290–292 (RMG).

It belongs to the THI4 family. As to quaternary structure, homooctamer. It depends on Fe cation as a cofactor. In terms of processing, during the catalytic reaction, a sulfide is transferred from Cys-211 to a reaction intermediate, generating a dehydroalanine residue.

It localises to the cytoplasm. Its subcellular location is the nucleus. It catalyses the reaction [ADP-thiazole synthase]-L-cysteine + glycine + NAD(+) = [ADP-thiazole synthase]-dehydroalanine + ADP-5-ethyl-4-methylthiazole-2-carboxylate + nicotinamide + 3 H2O + 2 H(+). In terms of biological role, involved in biosynthesis of the thiamine precursor thiazole. Catalyzes the conversion of NAD and glycine to adenosine diphosphate 5-(2-hydroxyethyl)-4-methylthiazole-2-carboxylic acid (ADT), an adenylated thiazole intermediate. The reaction includes an iron-dependent sulfide transfer from a conserved cysteine residue of the protein to a thiazole intermediate. The enzyme can only undergo a single turnover, which suggests it is a suicide enzyme. May have additional roles in adaptation to various stress conditions and in DNA damage tolerance. The chain is Thiamine thiazole synthase from Fusarium vanettenii (strain ATCC MYA-4622 / CBS 123669 / FGSC 9596 / NRRL 45880 / 77-13-4) (Fusarium solani subsp. pisi).